We begin with the raw amino-acid sequence, 266 residues long: MAEEIKNLRDEYVYKAKLAEQAERYDEMAEAMKNLVENCLDEQQPKDELSVEERNLLSVAYKNAVGARRASWRIISSVEQKELSKQHMQNKALAAEYRQKVEEELNKICHDILQLLTDKLIPKTSDSESKVFYYKMKGDYYRYISEFSGEEGKKQAADQAQESYQKATETAEGHSPATHPIRLGLALNYSVFFYEILNLPQQACEMAKRAFDDAITEFDNVSEDSYKDSTLIMQLLRDNLTLWTSDLQADQQQQEGGEKPAEQADQ.

Positions Lys154–Ala177 are disordered. The segment covering Asp158–Thr168 has biased composition (polar residues).

The protein belongs to the 14-3-3 family.

The protein is 14-3-3 protein homolog of Neospora caninum (Coccidian parasite).